The following is a 500-amino-acid chain: Na(+)/H(+) antiporter NhaB (500 aa).

Helical transmembrane passes span 34–54, 58–78, 96–116, 129–149, 150–170, 205–225, 241–261, 311–331, 350–370, 394–414, 450–470, and 477–497; these read LLLA…QFIF, MALK…ALLL, VILL…LLLF, AVLS…LDAL, TVTA…HRVA, LLMH…VGEP, FFLK…VTCV, ILIV…LMVI, FQDA…VAVI, MLYL…VATI, ATPN…APLI, and MVWM…WAVT.

This sequence belongs to the NhaB Na(+)/H(+) (TC 2.A.34) antiporter family.

The protein resides in the cell inner membrane. The catalysed reaction is 2 Na(+)(in) + 3 H(+)(out) = 2 Na(+)(out) + 3 H(+)(in). In terms of biological role, na(+)/H(+) antiporter that extrudes sodium in exchange for external protons. The protein is Na(+)/H(+) antiporter NhaB of Pseudomonas entomophila (strain L48).